We begin with the raw amino-acid sequence, 163 residues long: 3-isopropylmalate dehydratase small subunit (163 aa).

The protein belongs to the LeuD family. LeuD type 2 subfamily. Heterodimer of LeuC and LeuD.

It catalyses the reaction (2R,3S)-3-isopropylmalate = (2S)-2-isopropylmalate. Its pathway is amino-acid biosynthesis; L-leucine biosynthesis; L-leucine from 3-methyl-2-oxobutanoate: step 2/4. Its function is as follows. Catalyzes the isomerization between 2-isopropylmalate and 3-isopropylmalate, via the formation of 2-isopropylmaleate. The sequence is that of 3-isopropylmalate dehydratase small subunit from Brachyspira hyodysenteriae (strain ATCC 49526 / WA1).